Here is a 448-residue protein sequence, read N- to C-terminus: MQGTKNNIYTVSRLNGEVRQILEGQLGKIWLNGEISNFSSPSSGHWYLTLKDHSSQIRCAMFKGRNQTVSFKPINGQQVLVKGAISVYEPRGDYQLLIESMLPAGDGLLAQQFDALKMKLAAEGLFAADTKRPLPKNIQRIGVITSPTGAAIRDVLHVLARRDPSIEVIIYPTQVQGETAAQSICQAINIANQRLEVDVLLLTRGGGSLEDLWCFNSEALAHTIYNSALPVVSAVGHEVDTTISDYVADIRAPTPSAGAELLSQDSDNKAQKLATALSRLQQSAKHYQLKQERRLSLLEHRLQRQDPKRTLQQFEQRFDEMQLRLESALLNRLHILSRRQQLLASRLEQQSPKHKLTIEGNRLSYLASRLQDALQDKLSQSEQRIKYAAHQLETVSPLATLSRGYSITTDIHNQVVDSADKLTIGDSLQTRLRHGQVISTVTQIKPLE.

Belongs to the XseA family. Heterooligomer composed of large and small subunits.

It is found in the cytoplasm. The enzyme catalyses Exonucleolytic cleavage in either 5'- to 3'- or 3'- to 5'-direction to yield nucleoside 5'-phosphates.. Functionally, bidirectionally degrades single-stranded DNA into large acid-insoluble oligonucleotides, which are then degraded further into small acid-soluble oligonucleotides. In Shewanella baltica (strain OS155 / ATCC BAA-1091), this protein is Exodeoxyribonuclease 7 large subunit.